A 610-amino-acid chain; its full sequence is Calcium-dependent protein kinase 1 (610 aa).

G2 carries the N-myristoyl glycine lipid modification. C5 carries S-palmitoyl cysteine lipidation. A disordered region spans residues 17–133 (VSAAMWRPRD…HMKRVSSAGL (117 aa)). Composition is skewed to basic and acidic residues over residues 47–56 (LRSRLSDEVQ) and 70–117 (TDVE…DPPA). Positions 118 to 127 (KPKKPKHMKR) are enriched in basic residues. Residues 150 to 408 (YSLGRKLGQG…AHQVLCHPWV (259 aa)) enclose the Protein kinase domain. Residues 156–164 (LGQGQFGTT) and K179 each bind ATP. D274 (proton acceptor) is an active-site residue. Phosphoserine is present on S314. The interval 414–444 (APDKPLDSAVLSRMKQFSAMNKFKKMALRVI) is autoinhibitory domain. EF-hand domains are found at residues 451 to 486 (EEIA…VGAN), 487 to 522 (LKES…LNKI), 523 to 558 (ERED…FGVE), and 559 to 592 (DVRI…GSIT). Ca(2+)-binding residues include D464, D466, S468, Q470, E475, D500, D502, S504, T506, E511, D536, D538, S540, Y542, E547, D570, D572, D574, R576, and E581.

The protein belongs to the protein kinase superfamily. Ser/Thr protein kinase family. CDPK subfamily. Interacts with 14-3-3 proteins.

Its subcellular location is the peroxisome membrane. The enzyme catalyses L-seryl-[protein] + ATP = O-phospho-L-seryl-[protein] + ADP + H(+). It carries out the reaction L-threonyl-[protein] + ATP = O-phospho-L-threonyl-[protein] + ADP + H(+). Activated by calcium. Autophosphorylation may play an important role in the regulation of the kinase activity. In terms of biological role, may play a role in signal transduction pathways that involve calcium as a second messenger. Phosphorylates the Ca(2+)-ATPase ACA2 resulting in the inhibition of its calcium activation. The sequence is that of Calcium-dependent protein kinase 1 (CPK1) from Arabidopsis thaliana (Mouse-ear cress).